We begin with the raw amino-acid sequence, 403 residues long: MHRIVSVVAPLGFRLQAQPLVQSRPLSSVQDVLRRTPLYDFHLAHGGKMVAFAGWSLPVQYRDSHVDSHLHTRRHCSLFDVSHMLQTKIFGCDRVKLLESVVVGDIAELRPNQGTLSLFTNEAGGILDDLIVSNTSEGHLYVVSNAGCRDKDLALMQDKVKEFQNRGLDVGLEVVENALLALQGPTATQVLQAGVTDDMKKLPFMTSAVMEVFGVSGCRVTRCGYTGEDGVEISVPATGAVHLATTLLKNPEVKLAGLAARDSLRLEAGLCLYGNDIDEHTTPVEGSLSWTLGKRRRIAMDFPGAKIIVPQLKGEVQRRRVGLICEGAPVRAHSPILNTEGTVIGTVTSGCPSPSLKKNVAMGYVPFKYSRPGTQLLVEVRRKQQMTVVSKMPFVPTNYYTLK.

The N-terminal 28 residues, Met-1 to Ser-28, are a transit peptide targeting the mitochondrion. The substrate site is built by Glu-232 and Arg-261. An N6-succinyllysine modification is found at Lys-368. Position 399 (Tyr-399) interacts with substrate.

Belongs to the GcvT family. In terms of assembly, the glycine cleavage system is composed of four proteins: P, T, L and H.

Its subcellular location is the mitochondrion. It carries out the reaction N(6)-[(R)-S(8)-aminomethyldihydrolipoyl]-L-lysyl-[protein] + (6S)-5,6,7,8-tetrahydrofolate = N(6)-[(R)-dihydrolipoyl]-L-lysyl-[protein] + (6R)-5,10-methylene-5,6,7,8-tetrahydrofolate + NH4(+). The glycine cleavage system catalyzes the degradation of glycine. This chain is Aminomethyltransferase, mitochondrial, found in Mus musculus (Mouse).